The sequence spans 28 residues: Vasoactive intestinal peptide (28 aa).

N28 is modified (asparagine amide).

Belongs to the glucagon family.

The protein resides in the secreted. VIP is a neuropeptide involved in a diverse array of physiological processes through activating the PACAP subfamily of class B1 G protein-coupled receptors: VIP receptor 1 (VPR1) and VIP receptor 2 (VPR2). Abundantly expressed throughout the CNS and peripheral nervous systems where they primarily exert neuroprotective and immune modulatory roles. Also causes vasodilation, lowers arterial blood pressure, stimulates myocardial contractility, increases glycogenolysis and relaxes the smooth muscle of trachea, stomach and gall bladder. In Canis lupus familiaris (Dog), this protein is Vasoactive intestinal peptide (VIP).